The following is a 232-amino-acid chain: Putative N-acetylmannosamine-6-phosphate 2-epimerase (232 aa).

This sequence belongs to the NanE family.

It catalyses the reaction an N-acyl-D-glucosamine 6-phosphate = an N-acyl-D-mannosamine 6-phosphate. It participates in amino-sugar metabolism; N-acetylneuraminate degradation; D-fructose 6-phosphate from N-acetylneuraminate: step 3/5. Converts N-acetylmannosamine-6-phosphate (ManNAc-6-P) to N-acetylglucosamine-6-phosphate (GlcNAc-6-P). This chain is Putative N-acetylmannosamine-6-phosphate 2-epimerase, found in Proteus mirabilis (strain HI4320).